Consider the following 470-residue polypeptide: NADH-quinone oxidoreductase subunit D (470 aa).

The segment covering 1–18 (MTPSTSTPHTSTAPHTST) has biased composition (low complexity). Positions 1–37 (MTPSTSTPHTSTAPHTSTGQSTDGAAQPGDGSSAYEA) are disordered.

Belongs to the complex I 49 kDa subunit family. NDH-1 is composed of 14 different subunits. Subunits NuoB, C, D, E, F, and G constitute the peripheral sector of the complex.

Its subcellular location is the cell membrane. The enzyme catalyses a quinone + NADH + 5 H(+)(in) = a quinol + NAD(+) + 4 H(+)(out). Functionally, NDH-1 shuttles electrons from NADH, via FMN and iron-sulfur (Fe-S) centers, to quinones in the respiratory chain. The immediate electron acceptor for the enzyme in this species is believed to be a menaquinone. Couples the redox reaction to proton translocation (for every two electrons transferred, four hydrogen ions are translocated across the cytoplasmic membrane), and thus conserves the redox energy in a proton gradient. The sequence is that of NADH-quinone oxidoreductase subunit D from Frankia alni (strain DSM 45986 / CECT 9034 / ACN14a).